The sequence spans 320 residues: Acetyl-coenzyme A carboxylase carboxyl transferase subunit alpha (320 aa).

The 255-residue stretch at 41–295 (RIEEKAGQAL…GEAIAQAFDE (255 aa)) folds into the CoA carboxyltransferase C-terminal domain.

This sequence belongs to the AccA family. In terms of assembly, acetyl-CoA carboxylase is a heterohexamer composed of biotin carboxyl carrier protein (AccB), biotin carboxylase (AccC) and two subunits each of ACCase subunit alpha (AccA) and ACCase subunit beta (AccD).

It is found in the cytoplasm. It carries out the reaction N(6)-carboxybiotinyl-L-lysyl-[protein] + acetyl-CoA = N(6)-biotinyl-L-lysyl-[protein] + malonyl-CoA. It functions in the pathway lipid metabolism; malonyl-CoA biosynthesis; malonyl-CoA from acetyl-CoA: step 1/1. In terms of biological role, component of the acetyl coenzyme A carboxylase (ACC) complex. First, biotin carboxylase catalyzes the carboxylation of biotin on its carrier protein (BCCP) and then the CO(2) group is transferred by the carboxyltransferase to acetyl-CoA to form malonyl-CoA. The polypeptide is Acetyl-coenzyme A carboxylase carboxyl transferase subunit alpha (Bradyrhizobium sp. (strain BTAi1 / ATCC BAA-1182)).